A 163-amino-acid polypeptide reads, in one-letter code: uncharacterized protein (163 aa).

Residues 7 to 23 form a helical membrane-spanning segment; the sequence is TLVAFIATFFNLAATSI.

It is found in the membrane. This is an uncharacterized protein from Saccharomyces cerevisiae (strain ATCC 204508 / S288c) (Baker's yeast).